Reading from the N-terminus, the 828-residue chain is Glycerol-3-phosphate acyltransferase 1, mitochondrial (828 aa).

Over 1-87 the chain is Cytoplasmic; that stretch reads MDESALTLGT…FFNPSIPSLG (87 aa). The segment at 80 to 120 is important for mitochondrial localization; sequence NPSIPSLGLRNVIYINETHTRHRGWLARRLSYVLFIQERDV. An intramembrane segment occupies 88-118; the sequence is LRNVIYINETHTRHRGWLARRLSYVLFIQER. Residues 119-828 are Cytoplasmic-facing; sequence DVHKGMFATN…LEYILSFVVL (710 aa). The HXXXXD motif signature appears at 230–235; the sequence is HRSHID. CoA contacts are provided by R278, R279, K288, R293, and R328. Phosphoserine is present on S380. Residues 435 to 455 are disordered; that stretch reads SRPSDAADEGRDTSINESRNA. The segment covering 442–455 has biased composition (basic and acidic residues); it reads DEGRDTSINESRNA. R462 serves as a coordination point for CoA. 2 positions are modified to phosphoserine: S688 and S695. N6-acetyllysine is present on residues K780 and K784.

This sequence belongs to the GPAT/DAPAT family.

It localises to the mitochondrion outer membrane. The catalysed reaction is sn-glycerol 3-phosphate + an acyl-CoA = a 1-acyl-sn-glycero-3-phosphate + CoA. It catalyses the reaction (9Z,12Z)-octadecadienoyl-CoA + sn-glycerol 3-phosphate = 1-(9Z,12Z)-octadecadienoyl-sn-glycero-3-phosphate + CoA. It carries out the reaction sn-glycerol 3-phosphate + (9Z)-octadecenoyl-CoA = 1-(9Z-octadecenoyl)-sn-glycero-3-phosphate + CoA. The enzyme catalyses sn-glycerol 3-phosphate + octadecanoyl-CoA = 1-octadecanoyl-sn-glycero-3-phosphate + CoA. The catalysed reaction is sn-glycerol 3-phosphate + hexadecanoyl-CoA = 1-hexadecanoyl-sn-glycero-3-phosphate + CoA. It catalyses the reaction dodecanoyl-CoA + sn-glycerol 3-phosphate = 1-dodecanoyl-sn-glycerol 3-phosphate + CoA. It carries out the reaction 1-acyl-sn-glycero-3-phospho-(1'-sn-glycerol) + an acyl-CoA = a 1,2-diacyl-sn-glycero-3-phospho-(1'-sn-glycerol) + CoA. It participates in phospholipid metabolism; CDP-diacylglycerol biosynthesis; CDP-diacylglycerol from sn-glycerol 3-phosphate: step 1/3. In terms of biological role, mitochondrial membrane protein that catalyzes the essential first step of biosynthesis of glycerolipids such as triglycerides, phosphatidic acids and lysophosphatidic acids. Esterifies acyl-group from acyl-coenzyme A (acyl-CoA) to the sn-1 position of glycerol-3-phosphate, to produce lysophosphatidic acid. Has a narrow hydrophobic binding cleft that selects for a linear acyl chain. Catalytic activity is higher for substrates with a 16-carbon acyl chain. In Homo sapiens (Human), this protein is Glycerol-3-phosphate acyltransferase 1, mitochondrial.